Here is a 569-residue protein sequence, read N- to C-terminus: Neutral leucine aminopeptidase, chloroplastic (569 aa).

A chloroplast-targeting transit peptide spans 1–48; sequence MNGVLCSSSSSFHSYPSIFTKFQSSPIWSFSISVTPLCSRRAKRMAHS. Lys339 and Asp344 together coordinate Mn(2+). Residue Lys351 is part of the active site. Residues Asp364, Asp424, and Glu426 each coordinate Mn(2+). Arg428 is a catalytic residue.

The protein belongs to the peptidase M17 family. In terms of assembly, homohexamer (dimer of homotrimers). Mn(2+) is required as a cofactor. As to expression, expressed constitutively at low levels. Expressed in vegetative and reproductive organs, including leaves, stems, roots, cotyledons (after imbibition), pistils, sepals, petals, stamens, and floral buds (at protein level). Present at very low levels in healthy leaves.

It is found in the plastid. The protein resides in the chloroplast. The enzyme catalyses Release of an N-terminal amino acid, Xaa-|-Yaa-, in which Xaa is preferably Leu, but may be other amino acids including Pro although not Arg or Lys, and Yaa may be Pro. Amino acid amides and methyl esters are also readily hydrolyzed, but rates on arylamides are exceedingly low.. It carries out the reaction Release of N-terminal proline from a peptide.. In terms of biological role, catalyzes the removal of unsubstituted N-terminal amino acids from various peptides. When associated as homohexamer, catalyzes the proteolyzes of Xaa-Leu dipeptides. Possesses leucine aminopeptidase activity against the model substrate leucine-amido methyl coumarin. Presumably involved in the processing and regular turnover of intracellular proteins. Its function is as follows. Functions as a molecular chaperone to protect proteins from heat-induced damage. The protein is Neutral leucine aminopeptidase, chloroplastic of Solanum lycopersicum (Tomato).